A 728-amino-acid chain; its full sequence is Phosphoribosylformylglycinamidine synthase subunit PurL (728 aa).

Histidine 42 is an active-site residue. Residues tyrosine 45 and lysine 84 each contribute to the ATP site. A Mg(2+)-binding site is contributed by glutamate 86. Substrate is bound by residues 87–90 and arginine 109; that span reads SHNH. Histidine 88 functions as the Proton acceptor in the catalytic mechanism. Aspartate 110 provides a ligand contact to Mg(2+). Glutamine 237 is a binding site for substrate. Position 265 (aspartate 265) interacts with Mg(2+). 309 to 311 provides a ligand contact to substrate; the sequence is ESQ. Positions 491 and 528 each coordinate ATP. Asparagine 529 provides a ligand contact to Mg(2+). A substrate-binding site is contributed by serine 531.

Belongs to the FGAMS family. Monomer. Part of the FGAM synthase complex composed of 1 PurL, 1 PurQ and 2 PurS subunits.

It is found in the cytoplasm. It carries out the reaction N(2)-formyl-N(1)-(5-phospho-beta-D-ribosyl)glycinamide + L-glutamine + ATP + H2O = 2-formamido-N(1)-(5-O-phospho-beta-D-ribosyl)acetamidine + L-glutamate + ADP + phosphate + H(+). It functions in the pathway purine metabolism; IMP biosynthesis via de novo pathway; 5-amino-1-(5-phospho-D-ribosyl)imidazole from N(2)-formyl-N(1)-(5-phospho-D-ribosyl)glycinamide: step 1/2. Its function is as follows. Part of the phosphoribosylformylglycinamidine synthase complex involved in the purines biosynthetic pathway. Catalyzes the ATP-dependent conversion of formylglycinamide ribonucleotide (FGAR) and glutamine to yield formylglycinamidine ribonucleotide (FGAM) and glutamate. The FGAM synthase complex is composed of three subunits. PurQ produces an ammonia molecule by converting glutamine to glutamate. PurL transfers the ammonia molecule to FGAR to form FGAM in an ATP-dependent manner. PurS interacts with PurQ and PurL and is thought to assist in the transfer of the ammonia molecule from PurQ to PurL. The protein is Phosphoribosylformylglycinamidine synthase subunit PurL of Campylobacter jejuni subsp. doylei (strain ATCC BAA-1458 / RM4099 / 269.97).